The following is a 126-amino-acid chain: Protein ApaG (126 aa).

The region spanning 2-126 is the ApaG domain; it reads SALDDSIRVE…FRLALPGLLH (125 aa).

In Shewanella sp. (strain ANA-3), this protein is Protein ApaG.